Here is a 325-residue protein sequence, read N- to C-terminus: MLVISANEQRKLVNMNEVIAYAALALQEFSAERTITPIRTSLPFANEQNTALIMPSVAEGLEALGLKVVTVVPENKKIGKKTINGIVMLSDFQTGEPLALLEGSYLTMIRTGALSGVATKHLARHNAKTLCIIGTGEQAKGIAEAVFAVRDIEKVMLYNRTEEKAYAFAQYIQEKFGKPAYVYANANEAISEADIIVTTTNASTPVFSEKLQKGVHINAVGSFRPNMQELPSHAIANANKVVVESKEAALEETGDLQVPVREGLFEASDIHAELGQIISGEKAGRESDEEITVFKSVGLAVVDIIVAKYLYEKAVERGVGERIEF.

It belongs to the ornithine cyclodeaminase/mu-crystallin family.

The catalysed reaction is L-proline + NAD(+) = 1-pyrroline-2-carboxylate + NADH + H(+). It catalyses the reaction L-proline + NADP(+) = 1-pyrroline-2-carboxylate + NADPH + H(+). Functionally, catalyzes the reduction of Delta(1)-pyrroline-2-carboxylate (Pyr2C) to L-proline, using preferentially NADPH over NADH as the electron donor. May be involved in a degradation pathway that converts trans-3-hydroxy-L-proline (t3LHyp) to L-proline. This Bacillus cereus (strain ZK / E33L) protein is Delta(1)-pyrroline-2-carboxylate reductase.